We begin with the raw amino-acid sequence, 354 residues long: Protein-glutamate methylesterase/protein-glutamine glutaminase 2 (354 aa).

In terms of domain architecture, Response regulatory spans 5-122; sequence RVLIVDDSAL…SLKIKEVAEE (118 aa). Asp56 carries the post-translational modification 4-aspartylphosphate. The CheB-type methylesterase domain maps to 159-354; sequence PDTSFKKLIL…IADRIVELVR (196 aa). Catalysis depends on residues Ser172, His199, and Asp298.

Belongs to the CheB family. Phosphorylated by CheA. Phosphorylation of the N-terminal regulatory domain activates the methylesterase activity.

Its subcellular location is the cytoplasm. It carries out the reaction [protein]-L-glutamate 5-O-methyl ester + H2O = L-glutamyl-[protein] + methanol + H(+). The enzyme catalyses L-glutaminyl-[protein] + H2O = L-glutamyl-[protein] + NH4(+). In terms of biological role, involved in chemotaxis. Part of a chemotaxis signal transduction system that modulates chemotaxis in response to various stimuli. Catalyzes the demethylation of specific methylglutamate residues introduced into the chemoreceptors (methyl-accepting chemotaxis proteins or MCP) by CheR. Also mediates the irreversible deamidation of specific glutamine residues to glutamic acid. This is Protein-glutamate methylesterase/protein-glutamine glutaminase 2 from Carboxydothermus hydrogenoformans (strain ATCC BAA-161 / DSM 6008 / Z-2901).